We begin with the raw amino-acid sequence, 357 residues long: Meiotically up-regulated gene 135 protein (357 aa).

The protein belongs to the UPF0612 family.

Its subcellular location is the nucleus. In terms of biological role, has a role in meiosis. The polypeptide is Meiotically up-regulated gene 135 protein (mug135) (Schizosaccharomyces pombe (strain 972 / ATCC 24843) (Fission yeast)).